A 718-amino-acid polypeptide reads, in one-letter code: DNA ligase (718 aa).

NAD(+)-binding positions include 44–48 (DADYD), 93–94 (SL), and glutamate 127. The N6-AMP-lysine intermediate role is filled by lysine 129. The NAD(+) site is built by arginine 150, glutamate 186, lysine 302, and lysine 326. Residues cysteine 432, cysteine 435, cysteine 456, and cysteine 462 each contribute to the Zn(2+) site. In terms of domain architecture, BRCT spans 640 to 718 (TAGSPVAGKT…EDQWLALISG (79 aa)).

It belongs to the NAD-dependent DNA ligase family. LigA subfamily. Mg(2+) is required as a cofactor. The cofactor is Mn(2+).

The catalysed reaction is NAD(+) + (deoxyribonucleotide)n-3'-hydroxyl + 5'-phospho-(deoxyribonucleotide)m = (deoxyribonucleotide)n+m + AMP + beta-nicotinamide D-nucleotide.. Functionally, DNA ligase that catalyzes the formation of phosphodiester linkages between 5'-phosphoryl and 3'-hydroxyl groups in double-stranded DNA using NAD as a coenzyme and as the energy source for the reaction. It is essential for DNA replication and repair of damaged DNA. This chain is DNA ligase, found in Rhizobium johnstonii (strain DSM 114642 / LMG 32736 / 3841) (Rhizobium leguminosarum bv. viciae).